The chain runs to 238 residues: Phosphoribosylaminoimidazole-succinocarboxamide synthase (238 aa).

It belongs to the SAICAR synthetase family.

The enzyme catalyses 5-amino-1-(5-phospho-D-ribosyl)imidazole-4-carboxylate + L-aspartate + ATP = (2S)-2-[5-amino-1-(5-phospho-beta-D-ribosyl)imidazole-4-carboxamido]succinate + ADP + phosphate + 2 H(+). It participates in purine metabolism; IMP biosynthesis via de novo pathway; 5-amino-1-(5-phospho-D-ribosyl)imidazole-4-carboxamide from 5-amino-1-(5-phospho-D-ribosyl)imidazole-4-carboxylate: step 1/2. This Pyrococcus horikoshii (strain ATCC 700860 / DSM 12428 / JCM 9974 / NBRC 100139 / OT-3) protein is Phosphoribosylaminoimidazole-succinocarboxamide synthase (purC).